A 236-amino-acid polypeptide reads, in one-letter code: Ubiquinone biosynthesis O-methyltransferase (236 aa).

Residues Arg39, Gly59, Asp80, and Met124 each contribute to the S-adenosyl-L-methionine site.

This sequence belongs to the methyltransferase superfamily. UbiG/COQ3 family.

It carries out the reaction a 3-demethylubiquinol + S-adenosyl-L-methionine = a ubiquinol + S-adenosyl-L-homocysteine + H(+). It catalyses the reaction a 3-(all-trans-polyprenyl)benzene-1,2-diol + S-adenosyl-L-methionine = a 2-methoxy-6-(all-trans-polyprenyl)phenol + S-adenosyl-L-homocysteine + H(+). It functions in the pathway cofactor biosynthesis; ubiquinone biosynthesis. In terms of biological role, O-methyltransferase that catalyzes the 2 O-methylation steps in the ubiquinone biosynthetic pathway. This is Ubiquinone biosynthesis O-methyltransferase from Shewanella oneidensis (strain ATCC 700550 / JCM 31522 / CIP 106686 / LMG 19005 / NCIMB 14063 / MR-1).